Consider the following 234-residue polypeptide: Sugar fermentation stimulation protein homolog (234 aa).

This sequence belongs to the SfsA family.

This Shewanella sp. (strain MR-7) protein is Sugar fermentation stimulation protein homolog.